The sequence spans 460 residues: NADH-ubiquinone oxidoreductase chain 4 (460 aa).

A run of 13 helical transmembrane segments spans residues 22–42 (WLWP…ITWL), 61–81 (PLST…LLAS), 94–113 (RMYI…AFGA), 117–139 (IMFY…RWGN), 148–168 (TYFL…LLML), 195–217 (IWWA…HLWL), 225–245 (PVAG…YGMM), 258–278 (MVYP…SICL), 285–304 (SLIA…GILI), 308–330 (WGFT…LFCL), 351–371 (IALP…LALP), 394–414 (LILT…MFLM), and 436–456 (LLMA…ALLW).

It belongs to the complex I subunit 4 family.

The protein localises to the mitochondrion membrane. It carries out the reaction a ubiquinone + NADH + 5 H(+)(in) = a ubiquinol + NAD(+) + 4 H(+)(out). Functionally, core subunit of the mitochondrial membrane respiratory chain NADH dehydrogenase (Complex I) that is believed to belong to the minimal assembly required for catalysis. Complex I functions in the transfer of electrons from NADH to the respiratory chain. The immediate electron acceptor for the enzyme is believed to be ubiquinone. This is NADH-ubiquinone oxidoreductase chain 4 (MT-ND4) from Gadus morhua (Atlantic cod).